Consider the following 119-residue polypeptide: Large ribosomal subunit protein bL20 (119 aa).

It belongs to the bacterial ribosomal protein bL20 family.

In terms of biological role, binds directly to 23S ribosomal RNA and is necessary for the in vitro assembly process of the 50S ribosomal subunit. It is not involved in the protein synthesizing functions of that subunit. The sequence is that of Large ribosomal subunit protein bL20 from Levilactobacillus brevis (strain ATCC 367 / BCRC 12310 / CIP 105137 / JCM 1170 / LMG 11437 / NCIMB 947 / NCTC 947) (Lactobacillus brevis).